The sequence spans 709 residues: Bud site selection protein 14 (709 aa).

The residue at position 2 (serine 2) is an N-acetylserine. Positions 61 to 258 (DIINNRPTSG…DYQPLSPPRE (198 aa)) are disordered. 2 stretches are compositionally biased toward polar residues: residues 62-74 (IINN…SKLT) and 89-107 (VTPT…NILS). Basic and acidic residues-rich tracts occupy residues 111–123 (EKGH…RDDD) and 131–150 (VEKH…KENS). Tyrosine 159 is modified (phosphotyrosine). Phosphoserine is present on residues serine 160 and serine 162. Threonine 177 carries the phosphothreonine modification. Phosphoserine occurs at positions 212 and 222. Positions 212–226 (SEDEDEEENYSDDDD) are enriched in acidic residues. An SH3 domain is found at 259–320 (LDPDKLYALY…PAEILETFPE (62 aa)). The tract at residues 334–367 (SSQSVASSDSKDDSISSGNKNQSDAESIIPTPAL) is disordered. A phosphoserine mark is found at serine 376, serine 378, and serine 401. Over residues 396–406 (DTSLDSNDDGG) the composition is skewed to acidic residues. Disordered stretches follow at residues 396-421 (DTSL…DNDK), 464-510 (NVKK…SDYD), 525-571 (ANGM…SSRA), and 600-680 (ASLG…PASK). Positions 470–504 (RQDNKNESEPKTSSSKDREDDYNANRYVGQEKSEP) are enriched in basic and acidic residues. Residue serine 507 is modified to Phosphoserine. The segment covering 531 to 552 (SDSQNSLSTIGEFSPSSSEWTN) has biased composition (polar residues). The span at 553–569 (ESPSTPIVEESSSIPSS) shows a compositional bias: low complexity. Over residues 600–614 (ASLGSSGGMANQTDA) the composition is skewed to polar residues. Positions 615-633 (EQPKEELEKHHSTPEEEKQ) are enriched in basic and acidic residues. Residues serine 655, serine 658, and serine 670 each carry the phosphoserine modification. Positions 655-671 (SSASINSSLSGSRALSN) are enriched in low complexity.

As to quaternary structure, interacts with GLC7.

Functionally, important for bud site selection. Seems to be a regulatory subunit of the BUD14-GLC7 type-I phosphatase complex. The BUD14-GLC7 complex is necessary to regulate microtubule dynamics at the cortex and may function as a specific activator of the dynein complex. The protein is Bud site selection protein 14 (BUD14) of Saccharomyces cerevisiae (strain ATCC 204508 / S288c) (Baker's yeast).